A 188-amino-acid polypeptide reads, in one-letter code: Peptidyl-tRNA hydrolase (188 aa).

Residue Phe15 participates in tRNA binding. The active-site Proton acceptor is the His20. Positions 64, 66, and 112 each coordinate tRNA.

This sequence belongs to the PTH family. As to quaternary structure, monomer.

Its subcellular location is the cytoplasm. The catalysed reaction is an N-acyl-L-alpha-aminoacyl-tRNA + H2O = an N-acyl-L-amino acid + a tRNA + H(+). Functionally, hydrolyzes ribosome-free peptidyl-tRNAs (with 1 or more amino acids incorporated), which drop off the ribosome during protein synthesis, or as a result of ribosome stalling. In terms of biological role, catalyzes the release of premature peptidyl moieties from peptidyl-tRNA molecules trapped in stalled 50S ribosomal subunits, and thus maintains levels of free tRNAs and 50S ribosomes. In Borrelia turicatae (strain 91E135), this protein is Peptidyl-tRNA hydrolase.